The following is a 607-amino-acid chain: Chaperone protein DnaK (607 aa).

The residue at position 173 (threonine 173) is a Phosphothreonine; by autocatalysis. Residues 577 to 588 are compositionally biased toward low complexity; the sequence is AQAQQGAEGAAS. A disordered region spans residues 577–607; sequence AQAQQGAEGAASQDDDVVDADFTEVKDDDNK. Acidic residues predominate over residues 589-598; sequence QDDDVVDADF.

Belongs to the heat shock protein 70 family.

Its function is as follows. Acts as a chaperone. This chain is Chaperone protein DnaK, found in Macrococcus caseolyticus (strain JCSC5402) (Macrococcoides caseolyticum).